We begin with the raw amino-acid sequence, 344 residues long: tRNA N6-adenosine threonylcarbamoyltransferase (344 aa).

Fe cation contacts are provided by His110 and His114. Substrate contacts are provided by residues Ala133–Ala137, Asp166, Gly179, and Asn278. Asp303 is a binding site for Fe cation.

It belongs to the KAE1 / TsaD family. The cofactor is Fe(2+).

Its subcellular location is the cytoplasm. It carries out the reaction L-threonylcarbamoyladenylate + adenosine(37) in tRNA = N(6)-L-threonylcarbamoyladenosine(37) in tRNA + AMP + H(+). Its function is as follows. Required for the formation of a threonylcarbamoyl group on adenosine at position 37 (t(6)A37) in tRNAs that read codons beginning with adenine. Is involved in the transfer of the threonylcarbamoyl moiety of threonylcarbamoyl-AMP (TC-AMP) to the N6 group of A37, together with TsaE and TsaB. TsaD likely plays a direct catalytic role in this reaction. In Chlamydia caviae (strain ATCC VR-813 / DSM 19441 / 03DC25 / GPIC) (Chlamydophila caviae), this protein is tRNA N6-adenosine threonylcarbamoyltransferase.